Here is a 510-residue protein sequence, read N- to C-terminus: Ferredoxin--nitrite reductase (510 aa).

Residues Cys396, Cys402, Cys437, and Cys441 each contribute to the [4Fe-4S] cluster site. Residue Cys441 participates in siroheme binding.

This sequence belongs to the nitrite and sulfite reductase 4Fe-4S domain family.

It catalyses the reaction 6 oxidized [2Fe-2S]-[ferredoxin] + NH4(+) + 2 H2O = nitrite + 6 reduced [2Fe-2S]-[ferredoxin] + 8 H(+). The polypeptide is Ferredoxin--nitrite reductase (nirA) (Leptolyngbya laminosa (Phormidium laminosum)).